Consider the following 514-residue polypeptide: Zinc finger CCCH-type with G patch domain-containing protein (514 aa).

The interval 96 to 129 (GEEPQPPGAGDGASTGSKDSEEEEEEEDGSSGMK) is disordered. Over residues 115 to 124 (SEEEEEEEDG) the composition is skewed to acidic residues. Residues 171–197 (KAMKPCPFFLDGKCRFDDSCRFSHGQV) form a C3H1-type zinc finger. Disordered stretches follow at residues 262–288 (IPPL…AAED), 363–422 (QQRK…AAER), and 494–514 (EEHS…MTEF). Over residues 272–287 (SSDDDDDDEEEDDAAE) the composition is skewed to acidic residues. One can recognise a G-patch domain in the interval 315–373 (TRGIGSKLLARMGYEIGKGLGRNAEGRVEPIQAVLLPKGKSLDQCIEMQQRKKAGGKRE). The segment covering 365-383 (RKKAGGKREHKAGKRRPRA) has biased composition (basic residues).

The protein localises to the nucleus. Transcription repressor that specifically binds the 5'-GGAG[GA]A[GA]A-3' consensus sequence. Represses transcription by recruiting the chromatin multiprotein complex NuRD to target promoters. Negatively regulates expression of EGFR, a gene involved in cell proliferation, survival and migration. In Xenopus tropicalis (Western clawed frog), this protein is Zinc finger CCCH-type with G patch domain-containing protein (zgpat).